Consider the following 408-residue polypeptide: Multidrug resistance protein MdtG (408 aa).

Helical transmembrane passes span 16-36 (LIVAWLGCFLTGAAFSLVMPF), 58-78 (IVFSITFLFSSIASPFWGGLA), 92-112 (LGMGIVMVLMGLAQNIWQFLI), 115-135 (ALLGLLGGFVPNANALIATQV), 146-166 (TLSTGGVSGALLGPMAGGLLA), 173-193 (PVFFITASVLILCFFVTLFCI), 224-244 (LFVTTLIIQVATGSIAPILTL), 256-276 (VAFISGMIASVPGVAALLSAP), 290-310 (ILITALIFSVLLLIPMSYVQT), 319-339 (FLLGAADGALLPAVQTLLVYN), and 378-398 (AVFLVTAGVVLFNAVYSWNSL).

It belongs to the major facilitator superfamily. DHA1 family. MdtG (TC 2.A.1.2.20) subfamily.

It localises to the cell inner membrane. In terms of biological role, confers resistance to fosfomycin and deoxycholate. This chain is Multidrug resistance protein MdtG, found in Escherichia coli (strain 55989 / EAEC).